A 316-amino-acid chain; its full sequence is Ribosomal protein L11 methyltransferase (316 aa).

S-adenosyl-L-methionine contacts are provided by threonine 157, glycine 178, aspartate 200, and asparagine 243.

Belongs to the methyltransferase superfamily. PrmA family.

It is found in the cytoplasm. It carries out the reaction L-lysyl-[protein] + 3 S-adenosyl-L-methionine = N(6),N(6),N(6)-trimethyl-L-lysyl-[protein] + 3 S-adenosyl-L-homocysteine + 3 H(+). Functionally, methylates ribosomal protein L11. This chain is Ribosomal protein L11 methyltransferase, found in Streptococcus pneumoniae (strain Hungary19A-6).